Consider the following 1478-residue polypeptide: Serine/threonine-protein kinase BCK1/SLK1/SSP31 (1478 aa).

Disordered regions lie at residues 1-70 (MPFL…TSSQ), 99-126 (TSFT…GGNS), 217-359 (NVTN…RRHH), and 373-427 (FGSG…KGNL). The span at 29–49 (PTSSVASTKSSSKSPRATSRK) shows a compositional bias: low complexity. Polar residues-rich tracts occupy residues 58 to 70 (QFPN…TSSQ) and 99 to 110 (TSFTNSSYKNDN). Positions 111–126 (GPSSLSDSRKSSGGNS) are enriched in low complexity. Residues 223 to 233 (IRQKSASKLKS) show a composition bias toward basic residues. Composition is skewed to polar residues over residues 253–273 (DISN…SGPS) and 281–297 (LHST…SSLY). 2 stretches are compositionally biased toward low complexity: residues 298–320 (RRSF…SPSN) and 342–353 (SASPPASPSYPS). 2 stretches are compositionally biased toward polar residues: residues 386–396 (NPQGHSLSSEN) and 407–420 (TNVS…SLPT). A Phosphothreonine modification is found at T407. S411 and S491 each carry phosphoserine. A disordered region spans residues 644–671 (KPKPAPLTSENNVPLKSVKSKSSMRSGT). Residues 659–671 (KSVKSKSSMRSGT) show a composition bias toward low complexity. S747 is subject to Phosphoserine. Disordered regions lie at residues 752–877 (LNLP…ASTH), 895–939 (KTDQ…RGNS), 960–1021 (ADAP…TQDK), and 1053–1116 (TEGI…TPKR). Over residues 765-777 (TPITENESKSSFQ) the composition is skewed to polar residues. Basic and acidic residues predominate over residues 779–809 (LRKDEGTEIDFNHRRESPYTKPELAPKREAP). Polar residues predominate over residues 813–827 (ANTSPQRTLSTSKQN). Phosphoserine is present on S816. Composition is skewed to low complexity over residues 851-870 (QLLS…LTSS) and 914-925 (NRSNSTVSTSNS). Acidic residues predominate over residues 967–977 (DSDDSDDDSSS). The segment covering 994-1011 (NENKKDEKSDNSSTHSDE) has biased composition (basic and acidic residues). Residues S1058 and S1061 each carry the phosphoserine modification. Low complexity predominate over residues 1058 to 1083 (SPTSPKSLDSLLSPKNVASSRTEPST). S1134 bears the Phosphoserine; by PKC mark. In terms of domain architecture, Protein kinase spans 1175–1440 (WMKGEMIGKG…ANELLSHPFS (266 aa)). ATP is bound by residues 1181-1189 (IGKGSFGAV) and K1204. The active-site Proton acceptor is D1303.

It belongs to the protein kinase superfamily. STE Ser/Thr protein kinase family. MAP kinase kinase kinase subfamily.

It is found in the cytoplasm. The enzyme catalyses L-seryl-[protein] + ATP = O-phospho-L-seryl-[protein] + ADP + H(+). The catalysed reaction is L-threonyl-[protein] + ATP = O-phospho-L-threonyl-[protein] + ADP + H(+). Functionally, serine/threonine protein kinase involved in a signal transduction pathway that plays a role in yeast cell morphogenesis and cell growth. This pathway seems to start by SMP3; then involve the kinase PKC1 that may act on this kinase. BCK1 probably phosphorylates MKK1 and MKK2 which themselves phosphorylate the MPK1 kinase. The protein is Serine/threonine-protein kinase BCK1/SLK1/SSP31 (BCK1) of Saccharomyces cerevisiae (strain ATCC 204508 / S288c) (Baker's yeast).